Reading from the N-terminus, the 603-residue chain is Sesquiterpene synthase Cad (603 aa).

The span at 1 to 13 (MAEVGLSQNSYAS) shows a compositional bias: polar residues. The segment at 1–23 (MAEVGLSQNSYASANHDKKSEQQ) is disordered. Mg(2+)-binding residues include aspartate 357, aspartate 361, aspartate 498, and glutamate 506. Positions 357 to 361 (DDIFD) match the DDXXD motif motif.

This sequence belongs to the terpene synthase family. Tpsa subfamily. It depends on Mg(2+) as a cofactor. Mn(2+) serves as cofactor. Mostly expressed in leaves and, to a lower extent, in stems and xylem.

The catalysed reaction is (2E,6E)-farnesyl diphosphate = beta-cadinene + diphosphate. It functions in the pathway secondary metabolite biosynthesis; terpenoid biosynthesis. In terms of biological role, sesquiterpene synthase involved in the biosynthesis of volatile compounds. Mediates the conversion of (2E,6E)-farnesyl diphosphate (FPP) into beta-cadinene. Not active with geranyl diphosphate (GPP) and geranylgeranyl diphosphate (GGPP) as substrates. The sequence is that of Sesquiterpene synthase Cad from Chamaecyparis formosensis (Formosan cypress).